The chain runs to 474 residues: Aspartyl/glutamyl-tRNA(Asn/Gln) amidotransferase subunit B (474 aa).

This sequence belongs to the GatB/GatE family. GatB subfamily. In terms of assembly, heterotrimer of A, B and C subunits.

It catalyses the reaction L-glutamyl-tRNA(Gln) + L-glutamine + ATP + H2O = L-glutaminyl-tRNA(Gln) + L-glutamate + ADP + phosphate + H(+). The enzyme catalyses L-aspartyl-tRNA(Asn) + L-glutamine + ATP + H2O = L-asparaginyl-tRNA(Asn) + L-glutamate + ADP + phosphate + 2 H(+). Functionally, allows the formation of correctly charged Asn-tRNA(Asn) or Gln-tRNA(Gln) through the transamidation of misacylated Asp-tRNA(Asn) or Glu-tRNA(Gln) in organisms which lack either or both of asparaginyl-tRNA or glutaminyl-tRNA synthetases. The reaction takes place in the presence of glutamine and ATP through an activated phospho-Asp-tRNA(Asn) or phospho-Glu-tRNA(Gln). The polypeptide is Aspartyl/glutamyl-tRNA(Asn/Gln) amidotransferase subunit B (Limosilactobacillus fermentum (strain NBRC 3956 / LMG 18251) (Lactobacillus fermentum)).